Reading from the N-terminus, the 288-residue chain is Executioner caspase (288 aa).

Cys131 is a catalytic residue.

This sequence belongs to the peptidase C14A family.

In terms of biological role, may induce host cell apoptosis and contribute of the establishment of a special cell cleavage process in which apoppotic bodies are rescued by the virus and differentiate to form large vesicles in which virion assembles. In Spodoptera frugiperda ascovirus 1a (SfAV-1a), this protein is Executioner caspase.